The chain runs to 481 residues: uncharacterized protein (481 aa).

Residues 1–28 (MPQSNHYSHQSRSHNDRRRQQPDEKVQA) form a disordered region. Positions 29–87 (TVNIGQRFPLTIRRLGINGEGIGYYKHVITFVKGALPEEVVVAEVTAVHPRYLEAKIRS) constitute a TRAM domain. S-adenosyl-L-methionine is bound by residues glutamine 313, tyrosine 342, aspartate 363, and aspartate 411. Cysteine 438 functions as the Nucleophile in the catalytic mechanism.

Belongs to the class I-like SAM-binding methyltransferase superfamily. RNA M5U methyltransferase family.

This is an uncharacterized protein from Lactiplantibacillus plantarum (strain ATCC BAA-793 / NCIMB 8826 / WCFS1) (Lactobacillus plantarum).